The chain runs to 451 residues: Phosphoglucosamine mutase (451 aa).

Ser102 (phosphoserine intermediate) is an active-site residue. Ser102, Asp243, Asp245, and Asp247 together coordinate Mg(2+). Ser102 carries the post-translational modification Phosphoserine.

It belongs to the phosphohexose mutase family. Requires Mg(2+) as cofactor. In terms of processing, activated by phosphorylation.

It carries out the reaction alpha-D-glucosamine 1-phosphate = D-glucosamine 6-phosphate. Its function is as follows. Catalyzes the conversion of glucosamine-6-phosphate to glucosamine-1-phosphate. In Paramagnetospirillum magneticum (strain ATCC 700264 / AMB-1) (Magnetospirillum magneticum), this protein is Phosphoglucosamine mutase.